Here is a 515-residue protein sequence, read N- to C-terminus: SWI/SNF global transcription activator complex subunit snf59 (515 aa).

Residues 1-226 (MEEEDITLEH…IHHVDSKNEE (226 aa)) are disordered. Basic and acidic residues-rich tracts occupy residues 7–37 (TLEH…DNSN), 50–59 (EEPKYHDNSN), 73–85 (EPEH…KEST), 94–103 (EEPKHHDNSN), and 116–125 (EEPKHHDSSN). Positions 126–136 (KESTNLDNSNM) are enriched in polar residues. Over residues 140–226 (ENQKNFKIEE…IHHVDSKNEE (87 aa)) the composition is skewed to basic and acidic residues.

The protein belongs to the RSC7/SWP82 family. SWP82 subfamily. As to quaternary structure, component of the SWI/SNF global transcription activator complex composed of at least arp9, arp42, snf5, snf22, snf30, snf59, sol1, ssr1, ssr2, ssr3, ssr4 and tfg3.

Its subcellular location is the nucleus. In terms of biological role, component of the SWI/SNF complex, an ATP-dependent chromatin remodeling complex, which is required for the positive and negative regulation of gene expression of a large number of genes. It changes chromatin structure by altering DNA-histone contacts within a nucleosome, leading eventually to a change in nucleosome position, thus facilitating or repressing binding of gene-specific transcription factors. This Schizosaccharomyces pombe (strain 972 / ATCC 24843) (Fission yeast) protein is SWI/SNF global transcription activator complex subunit snf59 (snf59).